We begin with the raw amino-acid sequence, 337 residues long: Protein-methionine-sulfoxide reductase catalytic subunit MsrP (337 aa).

The tat-type signal signal peptide spans 1-48; that stretch reads MLIKIPSRSDCSESEVTSETLYLSRRRLLGASFAGLALASGLPRLGFA. Mo-molybdopterin-binding positions include N94, 97-98, C152, T187, N237, R242, and 253-255; these read YE and SIK.

The protein belongs to the MsrP family. In terms of assembly, heterodimer of a catalytic subunit (MsrP) and a heme-binding subunit (MsrQ). Requires Mo-molybdopterin as cofactor. Post-translationally, predicted to be exported by the Tat system. The position of the signal peptide cleavage has not been experimentally proven.

It is found in the periplasm. It carries out the reaction L-methionyl-[protein] + a quinone + H2O = L-methionyl-(S)-S-oxide-[protein] + a quinol. The catalysed reaction is L-methionyl-[protein] + a quinone + H2O = L-methionyl-(R)-S-oxide-[protein] + a quinol. Part of the MsrPQ system that repairs oxidized periplasmic proteins containing methionine sulfoxide residues (Met-O), using respiratory chain electrons. Thus protects these proteins from oxidative-stress damage caused by reactive species of oxygen and chlorine generated by the host defense mechanisms. MsrPQ is essential for the maintenance of envelope integrity under bleach stress, rescuing a wide series of structurally unrelated periplasmic proteins from methionine oxidation. The catalytic subunit MsrP is non-stereospecific, being able to reduce both (R-) and (S-) diastereoisomers of methionine sulfoxide. The sequence is that of Protein-methionine-sulfoxide reductase catalytic subunit MsrP from Pseudomonas aeruginosa (strain ATCC 15692 / DSM 22644 / CIP 104116 / JCM 14847 / LMG 12228 / 1C / PRS 101 / PAO1).